The primary structure comprises 91 residues: Small ribosomal subunit protein bS20 (91 aa).

Belongs to the bacterial ribosomal protein bS20 family.

In terms of biological role, binds directly to 16S ribosomal RNA. The polypeptide is Small ribosomal subunit protein bS20 (Caulobacter sp. (strain K31)).